A 1225-amino-acid chain; its full sequence is MSSQAEPSKGASNADPNEKVEKMHLPTDTAGGGVKVKVKEQEASPSDKNNLNPQSAGVSEVQVQDDTGARGSGARDLKVPKQMQAPKSSEEKSDVDGVPTRPVSERELRKRDAMQFIQRHQKVRNILAQYCPWLTDERLQLCIELKILFMQHFQDSRLVLYTAVMSFLFGYLRFGFLSLFIIMAVCIQYYRICDRRVKVNFKDDYTRYLSTRKLENDSETVTWLNTFLQQFWYIFEPSLSERITEITDQILSENVPSFIDSMALSEFTLGTKSPRMGFIRSYPKTEEDTVMMDLRLAFSPNDISDLTGREIAACIKPKIALDLKIGKSIASAKMPVLIEDLSFTGNLRVKVKLIDKYPYAKTVGLTFTEKPVFSYILKPLGGDKFGFDIGNIPGLTTFITEQIHNTLGPMMYSPNVYELDIESMMGAAGLNTALGAVEFKLRKGDGFKDGLGGAVDPYVVIKNSADRVIGKSKVAHNTGSPVFNETFYSVLNSFSENLNLEVYDFNDIRSDKLLGSAVLPLATLEAMPVTNDAFVELTLKGKTVGRLNYDMKFHAVVPDSGEEITKVDGPGVLQFTVHQCKELSNDPSKRPTAYAKLIINNKEVYTTRKIKKNNNPSWEESFGTLLPEGKNATLGVQIFTEESEHPFGTANVSLQDLFAATKTGLLWFPLQHAPSGRVRMSVMWKPAQLNNDSISSMALATPIGAIRIHLRSANNLHSKIPGKKCDSYARIMSHNTKQFRTVVIASNVNPFWDEYMYAPVITKHDIFFLQVMNYNSSGEDKLIGQTPINISNFINQGENGALMEYHDPRELTVPLSSTRGIKGNATITFKCDFFPSAVTTSLSPDVTPAPKASSTVATDKVNIEVLPESQKTPTAVDNTSTSRGSTSVKTSKPKKISELLMPSEAVNAALDFESGFMGFDIISYKIAKPAQELAIFLDDLPHHIFLSSALNVTGGATLHEYGNTFIRQLEYSQCTFKLLDGDKEVGSKTMLSRDLISKGATKPLEIAFPDGASILVAFRLTPVPVKLEEVEMYENMGEMTVDVIKATDLPAADSNGKSDPFVVFELQGEEVYRTKTHKRTLNPTFNESFEVELPCKQTCNFVANVFDWDFGNKDDHLGSCVIDCKLLQQQQQTNYEIPLDSKQGVLYLRITLSPKWVLRSKRAGNSSLVEGILGQTASIVGMPLKGISTVGNVAVDGVASVANLTNKMRKGISRGFKGIHHEKAK.

Polar residues predominate over residues 1-15; that stretch reads MSSQAEPSKGASNAD. Residues 1–104 form a disordered region; it reads MSSQAEPSKG…VDGVPTRPVS (104 aa). The segment covering 16 to 25 has biased composition (basic and acidic residues); that stretch reads PNEKVEKMHL. The segment covering 43-65 has biased composition (polar residues); it reads ASPSDKNNLNPQSAGVSEVQVQD. Residues 167-187 form a helical membrane-spanning segment; that stretch reads FLFGYLRFGFLSLFIIMAVCI. In terms of domain architecture, SMP-LTD spans 217-422; it reads DSETVTWLNT…SPNVYELDIE (206 aa). C2 domains are found at residues 413–534, 559–668, and 685–803; these read SPNV…NDAF, DSGE…LLWF, and KPAQ…GALM. Residue Ser843 is modified to Phosphoserine. A disordered region spans residues 867–890; that stretch reads PESQKTPTAVDNTSTSRGSTSVKT. Polar residues predominate over residues 869–890; sequence SQKTPTAVDNTSTSRGSTSVKT. The region spanning 1019 to 1137 is the C2 4 domain; it reads RLTPVPVKLE…QQQQQTNYEI (119 aa). Asp1053, Asp1059, Asp1107, Asp1109, and Asp1115 together coordinate Ca(2+).

The cofactor is Ca(2+).

The protein resides in the endoplasmic reticulum membrane. This is an uncharacterized protein from Schizosaccharomyces pombe (strain 972 / ATCC 24843) (Fission yeast).